A 377-amino-acid chain; its full sequence is UPF0754 membrane protein GTNG_0550 (377 aa).

Helical transmembrane passes span 7 to 27 (LLFM…IAIV) and 357 to 377 (YLGA…GLWL).

This sequence belongs to the UPF0754 family.

The protein resides in the cell membrane. This Geobacillus thermodenitrificans (strain NG80-2) protein is UPF0754 membrane protein GTNG_0550.